Reading from the N-terminus, the 131-residue chain is Phosphoribosyl-AMP cyclohydrolase (131 aa).

D78 contacts Mg(2+). C79 contributes to the Zn(2+) binding site. Mg(2+) is bound by residues D80 and D82. C96 and C103 together coordinate Zn(2+).

It belongs to the PRA-CH family. Homodimer. The cofactor is Mg(2+). Zn(2+) serves as cofactor.

Its subcellular location is the cytoplasm. It catalyses the reaction 1-(5-phospho-beta-D-ribosyl)-5'-AMP + H2O = 1-(5-phospho-beta-D-ribosyl)-5-[(5-phospho-beta-D-ribosylamino)methylideneamino]imidazole-4-carboxamide. It functions in the pathway amino-acid biosynthesis; L-histidine biosynthesis; L-histidine from 5-phospho-alpha-D-ribose 1-diphosphate: step 3/9. Catalyzes the hydrolysis of the adenine ring of phosphoribosyl-AMP. The polypeptide is Phosphoribosyl-AMP cyclohydrolase (Thioalkalivibrio sulfidiphilus (strain HL-EbGR7)).